The primary structure comprises 102 residues: Virulence-associated protein A (102 aa).

The HTH cro/C1-type domain maps to 14–69 (LKVMYLEPLGLNITETAEKLDMPRSALSEIVNAKRAISPEVAVKLEKAFPKHSASF). Residues 25–44 (NITETAEKLDMPRSALSEIV) constitute a DNA-binding region (H-T-H motif).

This sequence belongs to the VapA/VapI family.

The sequence is that of Virulence-associated protein A (vapA) from Dichelobacter nodosus (Bacteroides nodosus).